The sequence spans 201 residues: Small ribosomal subunit protein uS4 (201 aa).

The 61-residue stretch at 91 to 151 (SRLDNVVYRA…EKSQKMIWFE (61 aa)) folds into the S4 RNA-binding domain.

This sequence belongs to the universal ribosomal protein uS4 family. In terms of assembly, part of the 30S ribosomal subunit. Contacts protein S5. The interaction surface between S4 and S5 is involved in control of translational fidelity.

Its function is as follows. One of the primary rRNA binding proteins, it binds directly to 16S rRNA where it nucleates assembly of the body of the 30S subunit. In terms of biological role, with S5 and S12 plays an important role in translational accuracy. The polypeptide is Small ribosomal subunit protein uS4 (Corynebacterium diphtheriae (strain ATCC 700971 / NCTC 13129 / Biotype gravis)).